Reading from the N-terminus, the 274-residue chain is Hydroxyethylthiazole kinase (274 aa).

Residue M51 coordinates substrate. ATP contacts are provided by R127 and S173. G200 lines the substrate pocket.

The protein belongs to the Thz kinase family. Mg(2+) serves as cofactor.

It carries out the reaction 5-(2-hydroxyethyl)-4-methylthiazole + ATP = 4-methyl-5-(2-phosphooxyethyl)-thiazole + ADP + H(+). It functions in the pathway cofactor biosynthesis; thiamine diphosphate biosynthesis; 4-methyl-5-(2-phosphoethyl)-thiazole from 5-(2-hydroxyethyl)-4-methylthiazole: step 1/1. Catalyzes the phosphorylation of the hydroxyl group of 4-methyl-5-beta-hydroxyethylthiazole (THZ). The sequence is that of Hydroxyethylthiazole kinase from Photobacterium profundum (strain SS9).